We begin with the raw amino-acid sequence, 73 residues long: Small hydrophobic protein (73 aa).

Residues 1 to 19 (MNNTSTMIEFTGKFWTYFT) lie on the Intravirion side of the membrane. Residues 20 to 40 (LVFMMLIIGFFFVITSLVAAI) form a helical; Signal-anchor for type II membrane protein membrane-spanning segment. At 41 to 73 (LNKLCDLNDHHTNSLDIRTGLRNDTQSITRAHV) the chain is on the virion surface side. A glycan (N-linked (GlcNAc...) asparagine; by host) is linked at Asn-63.

It belongs to the orthopneumovirus small hydrophobic protein family. In terms of assembly, homopentamer forming a funnel-like pore. Interacts with glycoprotein G; this interaction occurs on the surface of virion particles and infected cells. Interacts with host BCAP31 (via C-terminus); this interaction is direct. In terms of processing, four species of SH have been detected in infected cell cytoplasm: a 7.5 kDa non-glycosylated form (SH0), a 13-15 kDa form that contains one or two N-linked carbohydrate side chains of the high-mannose type (SHg), a 21-30 kDa polylactosaminoglycan-modified form of the protein (SHp), and the isoform generated by alternative translational initiation. Of these different forms, SH0 is by far the most abundant protein detected during virus infection. Tyrosine phosphorylated.

It localises to the virion membrane. Its subcellular location is the host cell membrane. It is found in the host Golgi apparatus membrane. The protein localises to the host endoplasmic reticulum membrane. With respect to regulation, channel activity is inhibited by copper. Also inhibited by small-molecule pyronin B. Viroporin that forms a homopentameric ion channel displaying low ion selectivity. May play a role in virus morphogenesis and pathogenicity at various stages of the viral life cycle. Accumulates at the membrane of the Golgi apparatus in infected cells and may facilitate virus release by modifying the secretory pathway. May enhance host membrane permeability and disrupt cellular ion homeostasis, which can be sensed as damage-associated molecular patterns/danger signals, triggering NLRP3 inflammasome activation and inflammatory immune response. Also inhibits host TNFA-mediated signaling pathway and may delay apoptosis, allowing time for the virus to replicate. The protein is Small hydrophobic protein (SH) of Bovine respiratory syncytial virus (strain A51908) (BRS).